Consider the following 484-residue polypeptide: MKKGIRYETSRKTSYIFQQPQHGPWQTRMRKISNHGSLRVAKVAYPLGLCVGVFIYVAYIKWHRATATQAFFSITRAAPGARWGQQAHSPLGTAADGHEVFYGIMFDAGSTGTRVHVFQFTRPPRETPTLTHETFKALKPGLSAYADDVEKSAQGIRELLDVAKQDIPFDFWKATPLVLKATAGLRLLPGEKAQKLLQKVKKVFKASPFLVGDDCVSIMNGTDEGVSAWITINFLTGSLKTPGGSSVGMLDLGGGSTQIAFLPRVEGTLQASPPGYLTALRMFNRTYKLYSYSYLGLGLMSARLAILGGVEGQPAKDGKELVSPCLSPSFKGEWEHAEVTYRVSGQKAAASLHELCAARVSEVLQNRVHRTEEVKHVDFYAFSYYYDLAAGVGLIDAEKGGSLVVGDFEIAAKYVCRTLETQPQSSPFSCMDLTYVSLLLQEFGFPRSKVLKLTRKIDNVETSWALGAIFHYIDSLNRQKSPAS.

The Cytoplasmic segment spans residues M1–R39. Residues V40 to I60 form a helical; Signal-anchor for type II membrane protein membrane-spanning segment. Over K61–S484 the chain is Lumenal. N220 carries an N-linked (GlcNAc...) asparagine glycan. E224 functions as the Proton acceptor in the catalytic mechanism. N284 carries an N-linked (GlcNAc...) asparagine glycan. 2 disulfides stabilise this stretch: C325-C356 and C416-C430.

Belongs to the GDA1/CD39 NTPase family. In terms of assembly, monomer. Ca(2+) is required as a cofactor. The cofactor is Mg(2+). The secreted form may be produced by intracellular processing. Post-translationally, N-glycosylated. In terms of tissue distribution, expressed in most tissues, but predominantly in heart.

Its subcellular location is the golgi apparatus membrane. The protein resides in the secreted. It is found in the cell membrane. The enzyme catalyses a ribonucleoside 5'-diphosphate + H2O = a ribonucleoside 5'-phosphate + phosphate + H(+). It carries out the reaction IDP + H2O = IMP + phosphate + H(+). The catalysed reaction is GDP + H2O = GMP + phosphate + H(+). It catalyses the reaction UDP + H2O = UMP + phosphate + H(+). Its activity is regulated as follows. Glycosylation does not appear to be required for enzymatic activity. Functionally, catalyzes the hydrolysis of nucleoside triphosphates and diphosphates in a calcium- or magnesium-dependent manner. Has a strong preference for nucleoside diphosphates, preferentially hydrolyzes GDP, IDP, and UDP, with slower hydrolysis of CDP, ITP, GTP, CTP, ADP, and UTP and virtually no hydrolysis of ATP. The membrane bound form might support glycosylation reactions in the Golgi apparatus and, when released from cells, might catalyze the hydrolysis of extracellular nucleotides. The sequence is that of Ectonucleoside triphosphate diphosphohydrolase 6 (ENTPD6) from Homo sapiens (Human).